A 418-amino-acid polypeptide reads, in one-letter code: Caveolae-associated protein 2 (418 aa).

The segment at 1-42 (MGEDAAQAEKFQHPNTDMLQEKPSSPSPMPSSTPSPSLNLGS) is disordered. Glycine 2 is subject to N-acetylglycine. Residues 2–168 (GEDAAQAEKF…IFQEESEIPA (167 aa)) are interaction with CAVIN1. Serine 27, serine 35, serine 37, and serine 51 each carry phosphoserine. Coiled-coil stretches lie at residues 61 to 87 (LLDK…INLE) and 126 to 268 (RAVR…VERR). The interval 62–100 (LDKLVNMLDAVRENQHNMEQRQINLEGSVKGIQNDLTKL) is leucine-zipper. A Phosphothreonine modification is found at threonine 196. Disordered stretches follow at residues 200–238 (VDLS…SLKK) and 262–382 (IVSV…ALQQ). 3 positions are modified to phosphoserine: serine 203, serine 204, and serine 218. Over residues 203–219 (SSDDELPRDEEALEDSA) the composition is skewed to acidic residues. Basic and acidic residues predominate over residues 220 to 238 (EEKMEESRAEKIKRSSLKK). Residues 275-287 (LTPNHQKASSGKS) are compositionally biased toward polar residues. Serine 283, serine 284, serine 287, serine 288, serine 293, and serine 296 each carry phosphoserine. Residues 303-321 (REGESSVENETKLEDQMQE) show a composition bias toward basic and acidic residues. Phosphoserine occurs at positions 327, 336, 359, and 363. Over residues 355-366 (RGNNSAVGSNAD) the composition is skewed to polar residues. The residue at position 368 (threonine 368) is a Phosphothreonine. Over residues 368-377 (TIEEDEEEEP) the composition is skewed to acidic residues. Tyrosine 388 carries the post-translational modification Phosphotyrosine. Residues serine 390 and serine 396 each carry the phosphoserine modification. Residues 396–418 (SEEMEEPSEKQVQPAVLHVDQTA) form a disordered region.

The protein belongs to the CAVIN family. Component of the CAVIN complex composed of CAVIN1, CAVIN2, CAVIN3 and CAVIN4. Binds to PRKCA in the presence of phosphatidylserine. Interacts with CAVIN4; this augments the transactivation of NPPA by CAVIN4. Interacts with CAVIN1. Interacts with CAV3. The N-terminus is blocked. Heart, adipose tissue, lung and endothelial cells (at protein level). Highly expressed in kidney and expressed at lower levels in liver, spleen, thymus, stomach, intestine and uterus.

The protein resides in the cytoplasm. It is found in the cytosol. The protein localises to the membrane. It localises to the caveola. Its function is as follows. Plays an important role in caveolar biogenesis and morphology. Regulates caveolae morphology by inducing membrane curvature within caveolae. Plays a role in caveola formation in a tissue-specific manner. Required for the formation of caveolae in the lung and fat endothelia but not in the heart endothelia. Negatively regulates the size or stability of CAVIN complexes in the lung endothelial cells. May play a role in targeting PRKCA to caveolae. This chain is Caveolae-associated protein 2 (Cavin2), found in Mus musculus (Mouse).